The following is a 467-amino-acid chain: Chromosomal replication initiator protein DnaA (467 aa).

A domain I, interacts with DnaA modulators region spans residues 1-90 (MSLSLWQQCL…KPVTQTPQAA (90 aa)). Residues 91–130 (VTSNVAAPALVAQTQPQRAAPSTRSGWDNVPAPAEPTYRS) are domain II. A domain III, AAA+ region region spans residues 131 to 347 (NVNVKHTFDN…GALNRVIANA (217 aa)). The ATP site is built by Gly175, Gly177, Lys178, and Thr179. Positions 348–467 (NFTGRAITID…FSNLIRTLSS (120 aa)) are domain IV, binds dsDNA.

It belongs to the DnaA family. In terms of assembly, oligomerizes as a right-handed, spiral filament on DNA at oriC.

The protein localises to the cytoplasm. In terms of biological role, plays an essential role in the initiation and regulation of chromosomal replication. ATP-DnaA binds to the origin of replication (oriC) to initiate formation of the DNA replication initiation complex once per cell cycle. Binds the DnaA box (a 9 base pair repeat at the origin) and separates the double-stranded (ds)DNA. Forms a right-handed helical filament on oriC DNA; dsDNA binds to the exterior of the filament while single-stranded (ss)DNA is stabiized in the filament's interior. The ATP-DnaA-oriC complex binds and stabilizes one strand of the AT-rich DNA unwinding element (DUE), permitting loading of DNA polymerase. After initiation quickly degrades to an ADP-DnaA complex that is not apt for DNA replication. Binds acidic phospholipids. The chain is Chromosomal replication initiator protein DnaA from Shigella dysenteriae serotype 1 (strain Sd197).